The chain runs to 225 residues: MKISGFVYLILITTIINLSFSEANNYCKIKCRSGIHTLCKFGISTKPNCGKNVVKGSGLTKAEKLEILKQHNEFRQKVARGLETRGKPGPQPPAKSMNTLVWNDELAQIAQVWASQCKYGHDDCRNTAKHSVGQNIAQQSTTAASFGSVSNMVQMWADEVKNYQYGSTKNKLIEVGHYTQMVWAKTKEIGCGSIKYIENGWHRHYLVCNYGPAGNIGNEPIYEKK.

The N-terminal stretch at 1–23 (MKISGFVYLILITTIINLSFSEA) is a signal peptide. Intrachain disulfides connect cysteine 27–cysteine 39, cysteine 31–cysteine 124, cysteine 49–cysteine 117, and cysteine 191–cysteine 208. One can recognise an SCP domain in the interval 69 to 210 (KQHNEFRQKV…WHRHYLVCNY (142 aa)).

It belongs to the CRISP family. Venom allergen 5-like subfamily. Expressed by the venom gland.

The protein localises to the secreted. The sequence is that of Venom allergen 5 from Vespa magnifica (Hornet).